A 352-amino-acid polypeptide reads, in one-letter code: Lipoyl synthase (352 aa).

The segment at 1–21 (MTSVDTPTPHGGTPAPAPATA) is disordered. The [4Fe-4S] cluster site is built by cysteine 71, cysteine 76, cysteine 82, cysteine 97, cysteine 101, cysteine 104, and serine 308. In terms of domain architecture, Radical SAM core spans 83–297 (WEDREATFLI…SRVAEEIGFA (215 aa)).

This sequence belongs to the radical SAM superfamily. Lipoyl synthase family. [4Fe-4S] cluster is required as a cofactor.

It is found in the cytoplasm. It carries out the reaction [[Fe-S] cluster scaffold protein carrying a second [4Fe-4S](2+) cluster] + N(6)-octanoyl-L-lysyl-[protein] + 2 oxidized [2Fe-2S]-[ferredoxin] + 2 S-adenosyl-L-methionine + 4 H(+) = [[Fe-S] cluster scaffold protein] + N(6)-[(R)-dihydrolipoyl]-L-lysyl-[protein] + 4 Fe(3+) + 2 hydrogen sulfide + 2 5'-deoxyadenosine + 2 L-methionine + 2 reduced [2Fe-2S]-[ferredoxin]. Its pathway is protein modification; protein lipoylation via endogenous pathway; protein N(6)-(lipoyl)lysine from octanoyl-[acyl-carrier-protein]: step 2/2. Its function is as follows. Catalyzes the radical-mediated insertion of two sulfur atoms into the C-6 and C-8 positions of the octanoyl moiety bound to the lipoyl domains of lipoate-dependent enzymes, thereby converting the octanoylated domains into lipoylated derivatives. This is Lipoyl synthase from Nocardia farcinica (strain IFM 10152).